A 289-amino-acid polypeptide reads, in one-letter code: N-acetylmuramoyl-L-alanine amidase AmiA (289 aa).

Positions 1-34 (MSTFKLLKTLTSRRQVLKTGLAALTLSGMSHAVA) form a signal peptide, tat-type signal. The segment at 36 to 61 (EETLKTSNGHSKPKTKKTGSKRLVML) is disordered. The span at 46–55 (SKPKTKKTGS) shows a compositional bias: basic residues. Positions 59–273 (VMLDPGHGGI…IATAIANGII (215 aa)) constitute a MurNAc-LAA domain.

This sequence belongs to the N-acetylmuramoyl-L-alanine amidase 3 family. Post-translationally, predicted to be exported by the Tat system. The position of the signal peptide cleavage has not been experimentally proven.

It localises to the periplasm. The catalysed reaction is Hydrolyzes the link between N-acetylmuramoyl residues and L-amino acid residues in certain cell-wall glycopeptides.. In terms of biological role, cell-wall hydrolase involved in septum cleavage during cell division. This chain is N-acetylmuramoyl-L-alanine amidase AmiA (amiA), found in Salmonella typhimurium (strain LT2 / SGSC1412 / ATCC 700720).